Reading from the N-terminus, the 55-residue chain is MPQLNPHPWFAILVFSWIFFLVILPKKVMTHLFNNNPTAKSAEKPKPEPWNWPWT.

The helical transmembrane segment at 6–26 (PHPWFAILVFSWIFFLVILPK) threads the bilayer.

It belongs to the ATPase protein 8 family. In terms of assembly, F-type ATPases have 2 components, CF(1) - the catalytic core - and CF(0) - the membrane proton channel.

The protein resides in the mitochondrion membrane. Functionally, mitochondrial membrane ATP synthase (F(1)F(0) ATP synthase or Complex V) produces ATP from ADP in the presence of a proton gradient across the membrane which is generated by electron transport complexes of the respiratory chain. F-type ATPases consist of two structural domains, F(1) - containing the extramembraneous catalytic core and F(0) - containing the membrane proton channel, linked together by a central stalk and a peripheral stalk. During catalysis, ATP synthesis in the catalytic domain of F(1) is coupled via a rotary mechanism of the central stalk subunits to proton translocation. Part of the complex F(0) domain. Minor subunit located with subunit a in the membrane. This chain is ATP synthase protein 8 (MT-ATP8), found in Squalus acanthias (Spiny dogfish).